Here is a 379-residue protein sequence, read N- to C-terminus: Presenilin-associated rhomboid-like protein, mitochondrial (379 aa).

The transit peptide at 1 to 52 (MAWRGWAQRGWGCGQAWGASVGGRSCEELTAVLTPPQLLGRRFNFFIQQKCG) directs the protein to the mitochondrion. The Mitochondrial matrix segment spans residues 53–101 (FRKAPRKVEPRRSDPGTSGEAYKRSALIPPVEETVFYPSPYPIRSLIKP). Residue serine 65 is modified to Phosphoserine. Threonine 69 is modified (phosphothreonine). Serine 70 is modified (phosphoserine). A helical transmembrane segment spans residues 102–121 (LFFTVGFTGCAFGSAAIWQY). The Mitochondrial intermembrane segment spans residues 122–167 (ESLKSRVQSYFDGIKADWLDSIRPQKEGDFRKEINKWWNNLSDGQR). Residues 168-187 (TVTGIIAANVLVFCLWRVPS) form a helical membrane-spanning segment. Residues 188–207 (LQRTMIRYFTSNPASKVLCS) are Mitochondrial matrix-facing. The chain crosses the membrane as a helical span at residues 208–230 (PMLLSTFSHFSLFHMAANMYVLW). Topologically, residues 231–244 (SFSSSIVNILGQEQ) are mitochondrial intermembrane. A helical transmembrane segment spans residues 245 to 262 (FMAVYLSAGVISNFVSYV). Residues 263–272 (GKVATGRYGP) lie on the Mitochondrial matrix side of the membrane. The chain crosses the membrane as a helical span at residues 273-289 (SLGASGAIMTVLAAVCT). The Nucleophile role is filled by serine 277. The Mitochondrial intermembrane portion of the chain corresponds to 290-295 (KIPEGR). A helical transmembrane segment spans residues 296–318 (LAIIFLPMFTFTAGNALKAIIAM). Residues 319 to 332 (DTAGMILGWKFFDH) are Mitochondrial matrix-facing. A helical transmembrane segment spans residues 333-354 (AAHLGGALFGIWYVTYGHELIW). Histidine 335 is a catalytic residue. At 355 to 379 (KNREPLVKIWHEIRTNGPKKGGGSK) the chain is on the mitochondrial intermembrane side.

The protein belongs to the peptidase S54 family. Interacts with PSEN1 and PSEN2. Binds OPA1. In terms of processing, P-beta is proteolytically processed (beta-cleavage) in a PARL-dependent manner. The cleavage is inhibited when residues Ser-65, Thr-69 and Ser-70 are all phosphorylated.

It localises to the mitochondrion inner membrane. It is found in the nucleus. It carries out the reaction Cleaves type-1 transmembrane domains using a catalytic dyad composed of serine and histidine that are contributed by different transmembrane domains.. Required for the control of apoptosis during postnatal growth. Essential for proteolytic processing of an antiapoptotic form of OPA1 which prevents the release of mitochondrial cytochrome c in response to intrinsic apoptotic signals. Required for the maturation of PINK1 into its 52kDa mature form after its cleavage by mitochondrial-processing peptidase (MPP). Promotes cleavage of serine/threonine-protein phosphatase PGAM5 in damaged mitochondria in response to loss of mitochondrial membrane potential. Mediates differential cleavage of PINK1 and PGAM5 depending on the health status of mitochondria, disassociating from PINK1 and associating with PGAM5 in response to mitochondrial membrane potential loss. Required for processing of CLPB into a form with higher protein disaggregase activity by removing an autoinhibitory N-terminal peptide. Promotes processing of DIABLO/SMAC in the mitochondrion which is required for DIABLO apoptotic activity. Also required for cleavage of STARD7 and TTC19. Promotes changes in mitochondria morphology regulated by phosphorylation of P-beta domain. The polypeptide is Presenilin-associated rhomboid-like protein, mitochondrial (PARL) (Homo sapiens (Human)).